We begin with the raw amino-acid sequence, 216 residues long: 2,5-diamino-6-ribosylamino-4(3H)-pyrimidinone 5'-phosphate reductase (216 aa).

NADP(+) contacts are provided by residues Thr51, Asp55, Ser79–Arg82, Val126, and Gly148–Leu151.

Belongs to the HTP reductase family. As to quaternary structure, homodimer.

It catalyses the reaction 2,5-diamino-6-(1-D-ribitylamino)pyrimidin-4(3H)-one 5'-phosphate + NADP(+) = 2,5-diamino-6-(1-D-ribosylamino)pyrimidin-4(3H)-one 5'-phosphate + NADPH + H(+). The enzyme catalyses 2,5-diamino-6-(1-D-ribitylamino)pyrimidin-4(3H)-one 5'-phosphate + NAD(+) = 2,5-diamino-6-(1-D-ribosylamino)pyrimidin-4(3H)-one 5'-phosphate + NADH + H(+). Its pathway is cofactor biosynthesis; riboflavin biosynthesis. Its function is as follows. Catalyzes an early step in riboflavin biosynthesis, the NADPH-dependent reduction of the ribose side chain of 2,5-diamino-6-ribosylamino-4(3H)-pyrimidinone 5'-phosphate, yielding 2,5-diamino-6-ribitylamino-4(3H)-pyrimidinone 5'-phosphate. The sequence is that of 2,5-diamino-6-ribosylamino-4(3H)-pyrimidinone 5'-phosphate reductase from Methanothermobacter thermautotrophicus (strain ATCC 29096 / DSM 1053 / JCM 10044 / NBRC 100330 / Delta H) (Methanobacterium thermoautotrophicum).